The primary structure comprises 338 residues: MKILYWGTPEYAVPTLLALHAAGHEIVGVVTQPDRRRGRGKQLMPSAIKVCAQSLGLAVFTPERIKTDVGCQKELADLNADVSVVVAFGQILPKSVLEQPPLGCWNGHGSLLPRWRGAGPIQWALLEGDSETGVGIMAMEEGLDTGPVLLEQRLPISLDQNSHDLGEKLSQLTATLMVEAVDLILKAGVGTEPERLERLNVRYQGQEMSYARMLKKEDFQIKWGDPALRTHRRVMGLYPSAMTGWRNKRLKVLETEPLIERLSDEISEEARALLGRWRTGEDHPGTVLGCINNVGIVVSTSGCPILIREAQLEGKGRCRAQGLVQQLAASVGDRFQSF.

Residue 110-113 participates in (6S)-5,6,7,8-tetrahydrofolate binding; that stretch reads SLLP.

It belongs to the Fmt family.

It carries out the reaction L-methionyl-tRNA(fMet) + (6R)-10-formyltetrahydrofolate = N-formyl-L-methionyl-tRNA(fMet) + (6S)-5,6,7,8-tetrahydrofolate + H(+). Functionally, attaches a formyl group to the free amino group of methionyl-tRNA(fMet). The formyl group appears to play a dual role in the initiator identity of N-formylmethionyl-tRNA by promoting its recognition by IF2 and preventing the misappropriation of this tRNA by the elongation apparatus. The protein is Methionyl-tRNA formyltransferase of Synechococcus sp. (strain CC9902).